The following is a 615-amino-acid chain: Fibrinogen alpha chain (615 aa).

Positions M1–T19 are cleaved as a signal peptide. The stretch at C71–G602 forms a coiled coil. A disordered region spans residues F267–L427. A compositionally biased stretch (polar residues) spans G293 to P302. T325 is a glycosylation site (O-linked (GalNAc...) threonine). A compositionally biased stretch (low complexity) spans G373–G396. Residues C455 and C485 are joined by a disulfide bond. The segment at E530–P615 is disordered. Positions S537–K549 are enriched in low complexity. Positions Q550–R560 are enriched in polar residues. Over residues Q591–R601 the composition is skewed to basic residues.

Heterohexamer; disulfide linked. Contains 2 sets of 3 non-identical chains (alpha, beta and gamma). The 2 heterotrimers are in head to head conformation with the N-termini in a small central domain. Conversion of fibrinogen to fibrin is triggered by thrombin, which cleaves fibrinopeptides A and B from alpha and beta chains, and thus exposes the N-terminal polymerization sites responsible for the formation of the soft clot. The soft clot is converted into the hard clot by factor XIIIA which catalyzes the epsilon-(gamma-glutamyl)lysine cross-linking between gamma chains (stronger) and between alpha chains (weaker) of different monomers. Post-translationally, forms F13A-mediated cross-links between a glutamine and the epsilon-amino group of a lysine residue, forming fibronectin-fibrinogen heteropolymers.

The protein resides in the secreted. Cleaved by the protease thrombin to yield monomers which, together with fibrinogen beta (FGB) and fibrinogen gamma (FGG), polymerize to form an insoluble fibrin matrix. Fibrin has a major function in hemostasis as one of the primary components of blood clots. In addition, functions during the early stages of wound repair to stabilize the lesion and guide cell migration during re-epithelialization. Was originally thought to be essential for platelet aggregation, based on in vitro studies using anticoagulated blood. However, subsequent studies have shown that it is not absolutely required for thrombus formation in vivo. Enhances expression of SELP in activated platelets via an ITGB3-dependent pathway. Maternal fibrinogen is essential for successful pregnancy. Fibrin deposition is also associated with infection, where it protects against IFNG-mediated hemorrhage. May also facilitate the immune response via both innate and T-cell mediated pathways. The polypeptide is Fibrinogen alpha chain (FGA) (Bos taurus (Bovine)).